The sequence spans 326 residues: tRNA dimethylallyltransferase (326 aa).

18–25 (GPTASGKS) is a binding site for ATP. 20–25 (TASGKS) contacts substrate. 2 interaction with substrate tRNA regions span residues 43 to 46 (DSMQ) and 167 to 171 (QRIAR).

Belongs to the IPP transferase family. As to quaternary structure, monomer. Mg(2+) is required as a cofactor.

It carries out the reaction adenosine(37) in tRNA + dimethylallyl diphosphate = N(6)-dimethylallyladenosine(37) in tRNA + diphosphate. Functionally, catalyzes the transfer of a dimethylallyl group onto the adenine at position 37 in tRNAs that read codons beginning with uridine, leading to the formation of N6-(dimethylallyl)adenosine (i(6)A). This is tRNA dimethylallyltransferase from Rhodospirillum rubrum (strain ATCC 11170 / ATH 1.1.1 / DSM 467 / LMG 4362 / NCIMB 8255 / S1).